We begin with the raw amino-acid sequence, 247 residues long: Adenosylcobinamide-GDP ribazoletransferase (247 aa).

5 helical membrane passes run I34 to V54, C59 to F79, G113 to L133, I138 to Y158, and V194 to I214.

Belongs to the CobS family. It depends on Mg(2+) as a cofactor.

It is found in the cell inner membrane. It catalyses the reaction alpha-ribazole + adenosylcob(III)inamide-GDP = adenosylcob(III)alamin + GMP + H(+). The catalysed reaction is alpha-ribazole 5'-phosphate + adenosylcob(III)inamide-GDP = adenosylcob(III)alamin 5'-phosphate + GMP + H(+). The protein operates within cofactor biosynthesis; adenosylcobalamin biosynthesis; adenosylcobalamin from cob(II)yrinate a,c-diamide: step 7/7. In terms of biological role, joins adenosylcobinamide-GDP and alpha-ribazole to generate adenosylcobalamin (Ado-cobalamin). Also synthesizes adenosylcobalamin 5'-phosphate from adenosylcobinamide-GDP and alpha-ribazole 5'-phosphate. The protein is Adenosylcobinamide-GDP ribazoletransferase of Escherichia coli O81 (strain ED1a).